A 429-amino-acid chain; its full sequence is Probable imidazolonepropionase (429 aa).

Positions 161 and 194 each coordinate 4-imidazolone-5-propanoate. Residue Tyr161 coordinates N-formimidoyl-L-glutamate. Position 262 (His262) interacts with Fe(3+). A Zn(2+)-binding site is contributed by His262. Residue Glu265 coordinates 4-imidazolone-5-propanoate. Asp336 is a binding site for Fe(3+). Asp336 provides a ligand contact to Zn(2+). Asn338 is an N-formimidoyl-L-glutamate binding site.

The protein belongs to the metallo-dependent hydrolases superfamily. HutI family. Requires Zn(2+) as cofactor. Fe(3+) serves as cofactor.

It catalyses the reaction 4-imidazolone-5-propanoate + H2O = N-formimidoyl-L-glutamate. It participates in amino-acid degradation; L-histidine degradation into L-glutamate; N-formimidoyl-L-glutamate from L-histidine: step 3/3. In Nematostella vectensis (Starlet sea anemone), this protein is Probable imidazolonepropionase (amdhd1).